A 565-amino-acid chain; its full sequence is Proline--tRNA ligase (565 aa).

The protein belongs to the class-II aminoacyl-tRNA synthetase family. ProS type 1 subfamily. Homodimer.

It is found in the cytoplasm. The catalysed reaction is tRNA(Pro) + L-proline + ATP = L-prolyl-tRNA(Pro) + AMP + diphosphate. Functionally, catalyzes the attachment of proline to tRNA(Pro) in a two-step reaction: proline is first activated by ATP to form Pro-AMP and then transferred to the acceptor end of tRNA(Pro). As ProRS can inadvertently accommodate and process non-cognate amino acids such as alanine and cysteine, to avoid such errors it has two additional distinct editing activities against alanine. One activity is designated as 'pretransfer' editing and involves the tRNA(Pro)-independent hydrolysis of activated Ala-AMP. The other activity is designated 'posttransfer' editing and involves deacylation of mischarged Ala-tRNA(Pro). The misacylated Cys-tRNA(Pro) is not edited by ProRS. This Francisella philomiragia subsp. philomiragia (strain ATCC 25017 / CCUG 19701 / FSC 153 / O#319-036) protein is Proline--tRNA ligase.